Consider the following 293-residue polypeptide: Putative ABC transporter ATP-binding protein AF_0731 (293 aa).

The 235-residue stretch at isoleucine 2 to leucine 236 folds into the ABC transporter domain. Glycine 34–threonine 41 serves as a coordination point for ATP.

It belongs to the ABC transporter superfamily.

It is found in the cell membrane. In terms of biological role, probably part of an ABC transporter complex. Responsible for energy coupling to the transport system. In Archaeoglobus fulgidus (strain ATCC 49558 / DSM 4304 / JCM 9628 / NBRC 100126 / VC-16), this protein is Putative ABC transporter ATP-binding protein AF_0731.